Consider the following 159-residue polypeptide: Large ribosomal subunit protein uL23m (159 aa).

This sequence belongs to the universal ribosomal protein uL23 family. In terms of assembly, component of the mitochondrial ribosome large subunit (39S) which comprises a 16S rRNA and about 50 distinct proteins.

Its subcellular location is the mitochondrion. This is Large ribosomal subunit protein uL23m (mrpl-23) from Caenorhabditis elegans.